Consider the following 89-residue polypeptide: MAKKSIIARNEKRKKLVEKYAAKREELLKAGDYEALRKLPRDSSATRVKNRCVLTGRGRGVYEKFGLCRQMFRKFALEGKLPGVKKASW.

This sequence belongs to the universal ribosomal protein uS14 family. In terms of assembly, part of the 30S ribosomal subunit. Contacts proteins S3 and S10.

Its function is as follows. Binds 16S rRNA, required for the assembly of 30S particles and may also be responsible for determining the conformation of the 16S rRNA at the A site. This is Small ribosomal subunit protein uS14 from Chlorobium limicola (strain DSM 245 / NBRC 103803 / 6330).